The chain runs to 517 residues: Nicotine N-demethylase CYP82E4 (517 aa).

The chain crosses the membrane as a helical span at residues 2–22 (LSPIEAIVGLVTFTFLFYFLW). Lys254 participates in a covalent cross-link: Glycyl lysine isopeptide (Lys-Gly) (interchain with G-Cter in ubiquitin). Cys457 is a binding site for heme.

Belongs to the cytochrome P450 family. CYP82E2 subfamily. Heme is required as a cofactor. As to expression, expressed in leaves.

The protein resides in the membrane. It carries out the reaction (S)-nicotine + reduced [NADPH--hemoprotein reductase] + O2 = (S)-nornicotine + formaldehyde + oxidized [NADPH--hemoprotein reductase] + H2O + H(+). The protein operates within alkaloid biosynthesis; nicotine biosynthesis. Functionally, involved in the biosynthesis of pyridine alkaloid natural products, leading mainly to the production of anabasine, anatabine, nicotine and nornicotine, effective deterrents against herbivores with antiparasitic and pesticide properties (neurotoxins); nornicotine serves as the precursor in the synthesis of the carcinogen compound N'-nitrosonornicotine (NNN). Catalyzes the demethylation of nicotine to form nornicotine. The sequence is that of Nicotine N-demethylase CYP82E4 from Nicotiana tomentosiformis (Tobacco).